The chain runs to 293 residues: Histone H3-like centromeric protein CSE4 (293 aa).

Residues 132-141 (QDLSYDESDY) show a composition bias toward acidic residues. Residues 132 to 169 (QDLSYDESDYSDPLQEIDSNYRESPRRTTDKILKSSSK) form a disordered region. Positions 150–164 (SNYRESPRRTTDKIL) are enriched in basic and acidic residues. An H3-like region spans residues 157-291 (RRTTDKILKS…VQLARRIRGQ (135 aa)).

It belongs to the histone H3 family. As to quaternary structure, component of centromeric nucleosomes, where DNA is wrapped around a histone octamer core. The octamer contains two molecules each of H2A, H2B, CSE4/CENPA and H4 assembled in one CSE4-H4 heterotetramer and two H2A-H2B heterodimers. Interacts with the inner kinetochore. Post-translationally, ubiquitinated. Is degraded through ubiquitin-mediated proteolysis when not protected by its association to the kinetochore.

It localises to the nucleus. It is found in the chromosome. The protein localises to the centromere. Functionally, histone H3-like nucleosomal protein that is specifically found in centromeric nucleosomes. Replaces conventional H3 in the nucleosome core of centromeric chromatin that serves as an assembly site for the inner kinetochore. Required for recruitment and assembly of kinetochore proteins, mitotic progression and chromosome segregation. May serve as an epigenetic mark that propagates centromere identity through replication and cell division. The sequence is that of Histone H3-like centromeric protein CSE4 (CSE4) from Monosporozyma servazzii (Yeast).